A 235-amino-acid polypeptide reads, in one-letter code: Ribonuclease 3 (235 aa).

In terms of domain architecture, RNase III spans 6–131 (IDQLERLTEH…LIAVMYLDGG (126 aa)). E44 provides a ligand contact to Mg(2+). Residue D48 is part of the active site. Mg(2+) contacts are provided by D117 and E120. The active site involves E120. Positions 156–225 (DAKTELQEWA…AEKVLRREGI (70 aa)) constitute a DRBM domain.

The protein belongs to the ribonuclease III family. As to quaternary structure, homodimer. Mg(2+) is required as a cofactor.

It is found in the cytoplasm. It carries out the reaction Endonucleolytic cleavage to 5'-phosphomonoester.. Functionally, digests double-stranded RNA. Involved in the processing of primary rRNA transcript to yield the immediate precursors to the large and small rRNAs (23S and 16S). Processes some mRNAs, and tRNAs when they are encoded in the rRNA operon. Processes pre-crRNA and tracrRNA of type II CRISPR loci if present in the organism. In Bartonella quintana (strain Toulouse) (Rochalimaea quintana), this protein is Ribonuclease 3.